The following is a 212-amino-acid chain: Probable GTP-binding protein EngB (212 aa).

Residues 27–211 (GPPEIAFAGR…QAAIVLAANG (185 aa)) form the EngB-type G domain. Residues 35–42 (GRSNVGKS), 62–66 (GRTQE), 89–92 (DMPG), 156–159 (TKTD), and 190–192 (TSS) each bind GTP. 2 residues coordinate Mg(2+): Ser42 and Thr64.

This sequence belongs to the TRAFAC class TrmE-Era-EngA-EngB-Septin-like GTPase superfamily. EngB GTPase family. It depends on Mg(2+) as a cofactor.

Necessary for normal cell division and for the maintenance of normal septation. The chain is Probable GTP-binding protein EngB from Mesorhizobium japonicum (strain LMG 29417 / CECT 9101 / MAFF 303099) (Mesorhizobium loti (strain MAFF 303099)).